A 704-amino-acid chain; its full sequence is Protein NBR1 homolog (704 aa).

Met-1 is subject to N-acetylmethionine. Residues 7–92 (ALVVKVSYGG…KFLKINVNAG (86 aa)) form the PB1 domain. Polar residues-rich tracts occupy residues 95–108 (TNSA…SSTP), 171–189 (PQES…SGAS), and 223–233 (HSKTSGHVPNS). 2 disordered regions span residues 95-114 (TNSA…MPNP) and 171-233 (PQES…VPNS). Residues 286 to 336 (HKGIRCDGCGVLPITGPRFKSKVKEDYDLCTICYSVMGNEGDYTRMDKPVS) form a ZZ-type; degenerate zinc finger. Zn(2+)-binding residues include Cys-291, Cys-294, Cys-315, and Cys-318. Positions 657-701 (GVSEWDPILEELQEMGFCDDVTNKRLLKKNNGSIKGVVMDLLTGE) constitute a UBA domain. An LIR motif is present at residues 661–664 (WDPI).

As to quaternary structure, homodimer. Interacts with ATG8A, ATG8B, ATG8C, ATG8D, ATG8F and ATG8I. Binds to ubiquitin.

It localises to the cytoplasm. The protein resides in the vacuole. In terms of biological role, autophagic substrate degraded in the vacuole by non-selective autophagy. Requires ATG8 protein expression to be recognized as an autophagic substrate. Acts probably as a receptor for autophagosomal degradation of ubiquitinated proteins. Targets ubiquitinated protein aggregates derived from denatured or damaged non-native proteins generated under stress conditions. Functions additively with the E3 ubiquitin-protein ligase CHIP for autophagosomal degradation of proteotoxic aggregates formed under stress conditions. This chain is Protein NBR1 homolog, found in Arabidopsis thaliana (Mouse-ear cress).